The chain runs to 96 residues: MYAIVKTGGKQYKAEPGRLLKVEKLCANEGETVELPAICVRLDNGELKTEGKVKATVVKHDKHKKILVFKYKRKKNYKRLKGHRQPYTLIKVEEIV.

The protein belongs to the bacterial ribosomal protein bL21 family. Part of the 50S ribosomal subunit. Contacts protein L20.

Functionally, this protein binds to 23S rRNA in the presence of protein L20. The protein is Large ribosomal subunit protein bL21 of Sulfurihydrogenibium sp. (strain YO3AOP1).